The primary structure comprises 126 residues: Histone H2B type 2-E (126 aa).

Residues 1-12 are compositionally biased toward low complexity; the sequence is MPEPAKSAPAPK. The disordered stretch occupies residues 1-32; the sequence is MPEPAKSAPAPKKGSKKAVTKAQKKDGKKRKR. The residue at position 2 (Pro-2) is an N-acetylproline. Glu-3 is modified (ADP-ribosyl glutamic acid). Lys-6 is subject to N6-(2-hydroxyisobutyryl)lysine; alternate. The residue at position 6 (Lys-6) is an N6-(beta-hydroxybutyryl)lysine; alternate. Residue Lys-6 is modified to N6-acetyllysine; alternate. Lys-6 is modified (N6-butyryllysine; alternate). An N6-crotonyllysine; alternate modification is found at Lys-6. Lys-6 bears the N6-lactoyllysine; alternate mark. A Glycyl lysine isopeptide (Lys-Gly) (interchain with G-Cter in SUMO2); alternate cross-link involves residue Lys-6. Ser-7 is modified (ADP-ribosylserine). An N6-(beta-hydroxybutyryl)lysine; alternate modification is found at Lys-12. N6-acetyllysine; alternate occurs at positions 12 and 13. 2 positions are modified to N6-crotonyllysine; alternate: Lys-12 and Lys-13. Lys-12 carries the post-translational modification N6-lactoyllysine; alternate. At Lys-13 the chain carries N6-(2-hydroxyisobutyryl)lysine; alternate. Phosphoserine; by STK4/MST1 is present on Ser-15. An N6-acetyllysine; alternate mark is found at Lys-16, Lys-17, Lys-21, and Lys-24. An N6-crotonyllysine; alternate mark is found at Lys-16, Lys-17, Lys-21, and Lys-24. N6-lactoyllysine; alternate occurs at positions 16, 17, 21, and 24. Lys-17 carries the post-translational modification N6-glutaryllysine; alternate. Lys-21 and Lys-24 each carry N6-(2-hydroxyisobutyryl)lysine; alternate. Position 21 is an N6-(beta-hydroxybutyryl)lysine; alternate (Lys-21). Lys-21 is modified (N6-butyryllysine; alternate). Lys-21 is covalently cross-linked (Glycyl lysine isopeptide (Lys-Gly) (interchain with G-Cter in SUMO2); alternate). Lys-25 is subject to N6-(2-hydroxyisobutyryl)lysine. The residue at position 35 (Lys-35) is an N6-(2-hydroxyisobutyryl)lysine; alternate. At Lys-35 the chain carries N6-(beta-hydroxybutyryl)lysine; alternate. N6-crotonyllysine; alternate is present on Lys-35. Lys-35 is modified (N6-glutaryllysine; alternate). Lys-35 is subject to N6-succinyllysine; alternate. A Glycyl lysine isopeptide (Lys-Gly) (interchain with G-Cter in ubiquitin); alternate cross-link involves residue Lys-35. At Glu-36 the chain carries PolyADP-ribosyl glutamic acid. A Phosphoserine; by AMPK modification is found at Ser-37. 3 positions are modified to N6-(2-hydroxyisobutyryl)lysine; alternate: Lys-44, Lys-47, and Lys-58. N6-lactoyllysine; alternate is present on Lys-44. Lys-44 and Lys-47 each carry N6-glutaryllysine; alternate. N6-methyllysine; alternate is present on Lys-47. Position 58 is an N6,N6-dimethyllysine; alternate (Lys-58). Dimethylated arginine is present on Arg-80. The residue at position 86 (Lys-86) is an N6-(2-hydroxyisobutyryl)lysine; alternate. The residue at position 86 (Lys-86) is an N6-acetyllysine; alternate. The residue at position 86 (Lys-86) is an N6-lactoyllysine; alternate. Lys-86 carries the post-translational modification N6,N6,N6-trimethyllysine; alternate. Omega-N-methylarginine occurs at positions 87 and 93. Lys-109 is modified (N6-(2-hydroxyisobutyryl)lysine; alternate). Lys-109 is modified (N6-lactoyllysine; alternate). Lys-109 is subject to N6-glutaryllysine; alternate. Lys-109 bears the N6-methyllysine; alternate mark. O-linked (GlcNAc) serine glycosylation is present at Ser-113. Phosphothreonine is present on Thr-116. An N6-(2-hydroxyisobutyryl)lysine; alternate mark is found at Lys-117 and Lys-121. Position 117 is an N6-(beta-hydroxybutyryl)lysine; alternate (Lys-117). N6-lactoyllysine; alternate is present on residues Lys-117 and Lys-121. An N6-glutaryllysine; alternate mark is found at Lys-117 and Lys-121. Lys-117 and Lys-121 each carry N6-succinyllysine; alternate. Residue Lys-117 is modified to N6-methylated lysine; alternate. A Glycyl lysine isopeptide (Lys-Gly) (interchain with G-Cter in ubiquitin); alternate cross-link involves residue Lys-121.

It belongs to the histone H2B family. As to quaternary structure, the nucleosome is a histone octamer containing two molecules each of H2A, H2B, H3 and H4 assembled in one H3-H4 heterotetramer and two H2A-H2B heterodimers. The octamer wraps approximately 147 bp of DNA. Monoubiquitination at Lys-35 (H2BK34Ub) by the MSL1/MSL2 dimer is required for histone H3 'Lys-4' (H3K4me) and 'Lys-79' (H3K79me) methylation and transcription activation at specific gene loci, such as HOXA9 and MEIS1 loci. Similarly, monoubiquitination at Lys-121 (H2BK120Ub) by the RNF20/40 complex gives a specific tag for epigenetic transcriptional activation and is also prerequisite for histone H3 'Lys-4' and 'Lys-79' methylation. It also functions cooperatively with the FACT dimer to stimulate elongation by RNA polymerase II. H2BK120Ub also acts as a regulator of mRNA splicing: deubiquitination by USP49 is required for efficient cotranscriptional splicing of a large set of exons. Post-translationally, phosphorylated on Ser-15 (H2BS14ph) by STK4/MST1 during apoptosis; which facilitates apoptotic chromatin condensation. Also phosphorylated on Ser-15 in response to DNA double strand breaks (DSBs), and in correlation with somatic hypermutation and immunoglobulin class-switch recombination. Phosphorylation at Ser-37 (H2BS36ph) by AMPK in response to stress promotes transcription. In terms of processing, ADP-ribosylated by PARP1 or PARP2 on Ser-7 (H2BS6ADPr) in response to DNA damage. H2BS6ADPr promotes recruitment of CHD1L. Mono-ADP-ribosylated on Glu-3 (H2BE2ADPr) by PARP3 in response to single-strand breaks. Poly ADP-ribosylation on Glu-36 (H2BE35ADPr) by PARP1 regulates adipogenesis: it inhibits phosphorylation at Ser-37 (H2BS36ph), thereby blocking expression of pro-adipogenetic genes. Crotonylation (Kcr) is specifically present in male germ cells and marks testis-specific genes in post-meiotic cells, including X-linked genes that escape sex chromosome inactivation in haploid cells. Crotonylation marks active promoters and enhancers and confers resistance to transcriptional repressors. It is also associated with post-meiotically activated genes on autosomes. Post-translationally, glcNAcylation at Ser-113 promotes monoubiquitination of Lys-121. It fluctuates in response to extracellular glucose, and associates with transcribed genes. In terms of processing, lactylated in macrophages by EP300/P300 by using lactoyl-CoA directly derived from endogenous or exogenous lactate, leading to stimulates gene transcription.

The protein localises to the nucleus. Its subcellular location is the chromosome. Core component of nucleosome. Nucleosomes wrap and compact DNA into chromatin, limiting DNA accessibility to the cellular machineries which require DNA as a template. Histones thereby play a central role in transcription regulation, DNA repair, DNA replication and chromosomal stability. DNA accessibility is regulated via a complex set of post-translational modifications of histones, also called histone code, and nucleosome remodeling. Its function is as follows. Has broad antibacterial activity. May contribute to the formation of the functional antimicrobial barrier of the colonic epithelium, and to the bactericidal activity of amniotic fluid. In Pongo abelii (Sumatran orangutan), this protein is Histone H2B type 2-E.